Here is a 348-residue protein sequence, read N- to C-terminus: Protein pelota homolog (348 aa).

This sequence belongs to the eukaryotic release factor 1 family. Pelota subfamily. As to quaternary structure, monomer. The cofactor is a divalent metal cation.

The protein localises to the cytoplasm. Functionally, may function in recognizing stalled ribosomes, interact with stem-loop structures in stalled mRNA molecules, and effect endonucleolytic cleavage of the mRNA. May play a role in the release non-functional ribosomes and degradation of damaged mRNAs. Has endoribonuclease activity. This chain is Protein pelota homolog, found in Methanococcus aeolicus (strain ATCC BAA-1280 / DSM 17508 / OCM 812 / Nankai-3).